The primary structure comprises 360 residues: Peptide chain release factor 1 (360 aa).

Gln233 is subject to N5-methylglutamine. The segment at 286 to 305 (NEIAQERKSQVGTGDRSERI) is disordered.

Belongs to the prokaryotic/mitochondrial release factor family. Post-translationally, methylated by PrmC. Methylation increases the termination efficiency of RF1.

It is found in the cytoplasm. Functionally, peptide chain release factor 1 directs the termination of translation in response to the peptide chain termination codons UAG and UAA. This chain is Peptide chain release factor 1, found in Acetivibrio thermocellus (strain ATCC 27405 / DSM 1237 / JCM 9322 / NBRC 103400 / NCIMB 10682 / NRRL B-4536 / VPI 7372) (Clostridium thermocellum).